The chain runs to 254 residues: Transcription factor CAULIFLOWER (254 aa).

Residues 1–61 form the MADS-box domain; it reads MGRGRVEMKR…GKLFEYSSES (61 aa). In terms of domain architecture, K-box spans 90 to 180; the sequence is QTNWSMEYSR…TKQIKERESI (91 aa). The span at 182–191 shows a compositional bias: polar residues; it reads RTHQNQSEQQ. Positions 182–205 are disordered; sequence RTHQNQSEQQNRSHHVAPQPQPQL.

Homodimer capable of binding to CArG-box sequences.

It is found in the nucleus. Its function is as follows. Probable transcription factor that promotes early floral meristem identity in synergy with APETALA1, FRUITFULL and LEAFY. Is required subsequently for the transition of an inflorescence meristem into a floral meristem. Seems to be partially redundant to the function of APETALA1. The protein is Transcription factor CAULIFLOWER (CAL) of Brassica rapa subsp. pekinensis (Chinese cabbage).